A 446-amino-acid chain; its full sequence is Adenylosuccinate synthetase (446 aa).

GTP-binding positions include 20-26 (GDEGKGK) and 48-50 (GHT). Asp-21 acts as the Proton acceptor in catalysis. Asp-21 and Gly-48 together coordinate Mg(2+). IMP is bound by residues 21–24 (DEGK), 46–49 (NAGH), Thr-137, Arg-151, Gln-232, Thr-247, and Arg-319. His-49 (proton donor) is an active-site residue. Position 315–321 (315–321 (SVTGRPR)) interacts with substrate. GTP contacts are provided by residues Arg-321, 347–349 (KLD), and 429–431 (STG).

It belongs to the adenylosuccinate synthetase family. As to quaternary structure, homodimer. Mg(2+) serves as cofactor.

The protein resides in the cytoplasm. It catalyses the reaction IMP + L-aspartate + GTP = N(6)-(1,2-dicarboxyethyl)-AMP + GDP + phosphate + 2 H(+). The protein operates within purine metabolism; AMP biosynthesis via de novo pathway; AMP from IMP: step 1/2. Functionally, plays an important role in the de novo pathway of purine nucleotide biosynthesis. Catalyzes the first committed step in the biosynthesis of AMP from IMP. The protein is Adenylosuccinate synthetase of Ralstonia pickettii (strain 12J).